A 302-amino-acid chain; its full sequence is Rab effector Noc2 (302 aa).

Positions glutamine 41–glycine 158 constitute a RabBD domain. The segment at glycine 89 to glutamate 146 adopts an FYVE-type zinc-finger fold. Zn(2+) contacts are provided by cysteine 95, cysteine 98, cysteine 112, cysteine 115, cysteine 120, cysteine 123, cysteine 138, and cysteine 141. Disordered stretches follow at residues aspartate 174–valine 194 and valine 206–tyrosine 302. Residue serine 248 is modified to Phosphoserine. The span at serine 258–serine 269 shows a compositional bias: low complexity.

In terms of assembly, recruited to dense-core vesicles through specific interaction with RAB27A in endocrine cells. Interacts with RAB3A, RAB3B, RAB3C and RAB3D. Interacts with ZYX. As to expression, highly expressed in pancreatic islets and parotid. High to moderate expression in adrenal gland, pituitary gland and ovary.

The protein localises to the cytoplasm. Its subcellular location is the cytoplasmic vesicle. It localises to the secretory vesicle membrane. In terms of biological role, rab GTPase effector involved in the late steps of regulated exocytosis, both in endocrine and exocrine cells. Regulates the exocytosis of dense-core vesicles in neuroendocrine cells through interaction with RAB27A. Acts as a potential RAB3B effector protein in epithelial cells. The polypeptide is Rab effector Noc2 (Rph3al) (Rattus norvegicus (Rat)).